A 1244-amino-acid chain; its full sequence is MHIKSIHLDGFKSYQKHTDILDFSPTFNAITGYNGSGKSNILDSICFIMGINKLDNIRAKSMHELISHGGTKAIVQVRFDNTDKRCSPFGMEHLDEIVVQRIITAQATGKGCATSYTLNGHAATNGKMQDFFRGVGLNVNNPHFLIMQGRITTVLNMKPEEILGMVEEAAGTKMYDQKKKDAEKTMFLKDAKLKEVDRIFQSSIDPRMVKFREDRKNMVEVTRLKKLKENFSRKYEAFQYFQTCEAVKKSAKEIEDAKKGIEDLGEKFNQLDLDLKNKEDEKKKMEESRDDQHEEAALSAAHLSKQSIMLQKETVKNQLVETINKLKKEGEQINKSLSKDREVLDAKRKEHEDSKAANSKDIQSQSDDEALVTKYRNDLESLTRGTIANDKGEHVSIESEIQSCKSTASQMSSGITAAKKRGERLHNQIKHLEGEKATLSARSKSDIGSADNYQKEVDEINKQLQLLGFNIDADTEKREHAAKLHESITKLKDMDTRLLNSYKDGRYALNYQRPPLHIDKFDEKRDVFGYVAHLIKMKPGCEQFAVAADIALGGVLGNVVVSTQDIARILIDGKAFTSRKTMIPVSENARNASSYNTLPDVKLRRAKEIAEKYNDTVTKMIDLIEYPDFISNTILNAVGQILVVDSLDVAREIAYDEVAKTRMITRRGDDVRTNGIMTGGYNDPGNKPALIALEPMYARRPQIEAQQRELDALNRELQLTEASSQKCRDLNNQLATAMRKLAQVKTNINNSEFGIVVRDLKVHSEEYEKNQAEIEATVKTLKDVEDKIKTLESMKNKDKNSQEKRKKELTALLQKAEQTVAQNKNRGEKARREVMLLQATVEEMEKTIKKDEGIWEQKKKECDELEEKLPNAIAALKDAELEQKAAQAKLNDLKNNQRQISTRLGKIAKECDALIREKAKTKSKREEKEKELTSLQQSEASNRKEARSKLKKFEWLSDEEAHFNKKGGLYDFEGYTVSKGKDEIKELTDKIETLERSCCIQNVSNLDTCEAKVLDIKNKRERITEDFNMLKKTIATLDKKKVDELIRAHESVNKDFGQIFNCLLPDAHASLVPPEGKTVCEGLEVKVSFGGVVKDSLHELSGGQRSLVALSLILAMLKFKPAPLYILDEVDAALDLSHTANIGMMIKTHFHHNQFIIVSLKQGMFSNADVLFQTRFADGHSTCTRLNGGDIAVLCQDKVLQAQALELTDAGKAKKDAAAKKGAQKNDKEPPKKKPIVVDDDDFE.

32-39 (GYNGSGKS) contributes to the ATP binding site. Residues 247 to 355 (VKKSAKEIED…AKRKEHEDSK (109 aa)) adopt a coiled-coil conformation. A compositionally biased stretch (basic and acidic residues) spans 337–355 (LSKDREVLDAKRKEHEDSK). The tract at residues 337 to 369 (LSKDREVLDAKRKEHEDSKAANSKDIQSQSDDE) is disordered. Residues 356-365 (AANSKDIQSQ) are compositionally biased toward polar residues. Residues 415 to 472 (ITAAKKRGERLHNQIKHLEGEKATLSARSKSDIGSADNYQKEVDEINKQLQLLGFNID) are a coiled coil. The region spanning 526-654 (DVFGYVAHLI…DSLDVAREIA (129 aa)) is the SMC hinge domain. 2 coiled-coil regions span residues 701–946 (PQIE…RKEA) and 975–1037 (YTVS…IATL). Positions 919–932 (AKTKSKREEKEKEL) are enriched in basic and acidic residues. The interval 919 to 943 (AKTKSKREEKEKELTSLQQSEASNR) is disordered. Residues 1216–1232 (DAAAKKGAQKNDKEPPK) are compositionally biased toward basic and acidic residues. Positions 1216 to 1244 (DAAAKKGAQKNDKEPPKKKPIVVDDDDFE) are disordered.

Belongs to the SMC family. SMC2 subfamily. In terms of assembly, component of the condensin I complex, which contains the mix-1/SMC2 and smc-4/SMC4 heterodimer, and three non SMC subunits that probably regulate the complex: dpy-26, capg-1 and dpy-28. Within the complex, interacts with smc-4, dpy-26, dpy-28 and capg-1. Interaction with smc-4 is required for mitotic chromosome localization. Component of the condensin II complex, which contains the mix-1/SMC2 and smc-4/SMC4 heterodimer, and three non SMC subunits, capg-2, kle-2 and hcp-6 that probably regulate the complex. Within the complex, interacts with smc-4, capg-2, kle-2 and hcp-6. Also a component of the condensin-like dosage compensation complex, which contains the mix-1/SMC2 and dpy-27/SMC4 heterodimer, and three non SMC subunits that probably regulate the complex: dpy-26, capg-1 and dpy-28. Within the complex, interacts with dpy-27, dpy-26, capg-1 and dpy-28. Requires capg-1 for hermaphrodite X chromosome localization. Interacts with smcl-1. As to expression, expressed in embryos and in adult somatic and germline tissues (at protein level).

The protein localises to the nucleus. It is found in the chromosome. Essential protein required for both chromosome condensation and segregation and X-chromosome dosage compensation depending on its binding partners. Central component of the condensin I complex, a complex required for conversion of interphase chromatin into mitotic-like condense chromosomes. The condensin complex introduces positive supercoils into relaxed DNA in the presence of type I topoisomerases. Converts nicked DNA into positive knotted forms in the presence of type II topoisomerases. Central component of the condensin II complex, a complex that seems to play a role in prophase chromosome condensation and organization. Both the condensin complex I and II play a role in meiotic and mitotic chromosome segregation. Plays a role in robust cytokinesis upon the presence of chromatin obstructions. Also a member of the condensin I-like dosage compensation complex that associates specifically with hermaphrodite X chromosomes to reduce their gene transcription during interphase. The sequence is that of Mitotic chromosome and X-chromosome-associated protein mix-1 (mix-1) from Caenorhabditis elegans.